The chain runs to 239 residues: Pre-mRNA-splicing factor isy1 (239 aa).

Belongs to the ISY1 family. As to quaternary structure, associated with the spliceosome.

Its subcellular location is the cytoplasm. It localises to the nucleus. In terms of biological role, involved in pre-mRNA splicing. The protein is Pre-mRNA-splicing factor isy1 (msp-7) of Neurospora crassa (strain ATCC 24698 / 74-OR23-1A / CBS 708.71 / DSM 1257 / FGSC 987).